The primary structure comprises 279 residues: Large ribosomal subunit protein uL3 (279 aa).

The residue at position 151 (Gln-151) is an N5-methylglutamine.

Belongs to the universal ribosomal protein uL3 family. In terms of assembly, part of the 50S ribosomal subunit. Forms a cluster with proteins L14 and L19. In terms of processing, methylated by PrmB.

One of the primary rRNA binding proteins, it binds directly near the 3'-end of the 23S rRNA, where it nucleates assembly of the 50S subunit. The chain is Large ribosomal subunit protein uL3 from Dinoroseobacter shibae (strain DSM 16493 / NCIMB 14021 / DFL 12).